The sequence spans 377 residues: Galactoside alpha-(1,2)-fucosyltransferase 1 (377 aa).

At M1 to Q8 the chain is on the cytoplasmic side. The chain crosses the membrane as a helical; Signal-anchor for type II membrane protein span at residues L9 to F26. Topologically, residues H27–V377 are lumenal. N-linked (GlcNAc...) asparagine glycosylation is found at N67, N303, and N329.

The protein belongs to the glycosyltransferase 11 family. In the adult, highly expressed in pancreas, testis and epididymis and to a lesser extent in thymus, lung, stomach, small intestine, colon, spleen and uterus. Not expressed in brain, heart, skeletal muscle, kidney, liver and bone marrow. Expressed in epididymis and testis.

Its subcellular location is the golgi apparatus. The protein resides in the golgi stack membrane. It catalyses the reaction a beta-D-galactosyl-(1-&gt;4)-N-acetyl-beta-D-glucosaminyl derivative + GDP-beta-L-fucose = an alpha-L-Fuc-(1-&gt;2)-beta-D-Gal-(1-&gt;4)-beta-D-GlcNAc derivative + GDP + H(+). The catalysed reaction is a ganglioside GA1 + GDP-beta-L-fucose = a ganglioside Fuc-GA1 + GDP + H(+). It carries out the reaction a beta-D-Gal-(1-&gt;3)-beta-D-GlcNAc-(1-&gt;3)-beta-D-Gal-(1-&gt;4)-beta-D-Glc-(1&lt;-&gt;1')-Cer(d18:1(4E)) + GDP-beta-L-fucose = alpha-L-fucosyl-(1-&gt;2)- beta-D-galactosyl-(1-&gt;3)-N-acetyl-beta-D-glucosaminyl-(1-&gt;3)-beta-D-galactosyl-(1-&gt;4)-beta-D-glucosyl-(1&lt;-&gt;1')-N-acylsphing-4-enine + GDP + H(+). The enzyme catalyses a neolactoside nLc4Cer(d18:1(4E)) + GDP-beta-L-fucose = a neolactoside IV(2)-alpha-Fuc-nLc4Cer(d18:1(4E)) + GDP + H(+). It catalyses the reaction a ganglioside GM1 + GDP-beta-L-fucose = a ganglioside Fuc-GM1 + GDP + H(+). The catalysed reaction is beta-D-galactosyl-(1-&gt;3)-N-acetyl-D-galactosamine + GDP-beta-L-fucose = alpha-L-fucosyl-(1-&gt;2)-beta-D-galactosyl-(1-&gt;3)-N-acetyl-D-galactosamine + GDP + H(+). The protein operates within protein modification; protein glycosylation. Catalyzes the transfer of L-fucose, from a guanosine diphosphate-beta-L-fucose, to the terminal galactose residue of glycoconjugates through an alpha(1,2) linkage leading to H antigen synthesis that is an intermediate substrate in the synthesis of ABO blood group antigens. H antigen is essential for maturation of the glomerular layer of the main olfactory bulb, in cell migration and early cell-cell contacts during tumor associated angiogenesis. Preferentially fucosylates soluble lactose and to a lesser extent, fucosylates glycolipids gangliosides GA1 and GM1a. The polypeptide is Galactoside alpha-(1,2)-fucosyltransferase 1 (Mus musculus (Mouse)).